Reading from the N-terminus, the 140-residue chain is RxLR effector protein CRE2 (140 aa).

The N-terminal stretch at 1–24 is a signal peptide; the sequence is MRWLIWTAVSTLVMLLAMTEVSAS. Positions 56 to 72 match the RxLR-dEER motif; that stretch reads RSLRDKSSSLITESEER.

This sequence belongs to the RxLR effector family.

The protein resides in the secreted. It is found in the host cell. Its function is as follows. Effector that is involved in host plant infection. Contributes to virulence during the early infection stage, by inhibiting plant defense responses induced by both PAMP-triggered immunity (PTI) and effector-triggered immunity (ETI). This Phytophthora infestans (strain T30-4) (Potato late blight agent) protein is RxLR effector protein CRE2.